Here is a 578-residue protein sequence, read N- to C-terminus: Endonuclease GajA (578 aa).

Positions 1 to 341 are ATPase domain; that stretch reads MKFSNITIKN…RLIRVHSTEK (341 aa). An ATP-binding site is contributed by 32 to 36; sequence DIGKT. Residues 370–510 are toprim domain; it reads LFAERVLLIE…LGERIYLSEI (141 aa). The a divalent metal cation site is built by Glu-379, Glu-383, Asp-463, Glu-464, and Glu-513.

In terms of assembly, homotetramer. Forms the core of the anti-phage defense complex. Interacts with GajB; 2 GajB dimers dock at opposite sides of the GajA complex to form a 4:4 GajA-GajB assembly (GajAB). GajAB interacts with Bacillus phage Phi3T Gad1 protein; this interaction forms a 4:4:8 GajAB-Gad1 complex and leads to GajAB inhibition. Mg(2+) serves as cofactor. Mn(2+) is required as a cofactor.

With respect to regulation, endonuclease activity inhibited by all NTPs, dNTPs, NDPs (at 0.5 mM, UDP not tested) and AMP-PNP; not inhibited by any tested NMP, dNMP or nucleoside. Inhibited by 100 mM NaCl, 100 mM KCl, 0.5 mM Co(2+) and 0.5 mM Ni(2+). Its function is as follows. Component of antiviral defense system Gabija type I, composed of GajA and GajB. Endonuclease that nicks double-stranded DNA within the sequence 5'-TNNNCGGGNNA-3' in the absence of nucleotides (NTP, dNTP and NDPs), cleaving after C-1. Has no detected ATPase activity. Expression of Gabija type I in B.subtilis (strain BEST7003) confers resistance to phages phi105, phi29, rho14, SpBeta and SBSphiC. Expression of Gabija type I in E.coli B (strain ATCC 11303) confers resistance to phage T7. It is thought that this enzyme is strongly suppressed during physiological growth (in E.coli total nucleotide concentration is over 8.7 mM in mid-log phase), but during viral replication, when nucleotides are rapidly consumed, it is de-suppressed and degrades target DNA. The protein is Endonuclease GajA of Bacillus cereus (strain VD045).